The following is a 214-amino-acid chain: Orotate phosphoribosyltransferase (214 aa).

A 5-phospho-alpha-D-ribose 1-diphosphate-binding site is contributed by K26. F34–F35 lines the orotate pocket. 5-phospho-alpha-D-ribose 1-diphosphate-binding positions include Y72 to K73, R99, K100, K103, H105, and D124 to A132. Orotate is bound by residues T128 and R157.

This sequence belongs to the purine/pyrimidine phosphoribosyltransferase family. PyrE subfamily. As to quaternary structure, homodimer. Mg(2+) serves as cofactor.

The catalysed reaction is orotidine 5'-phosphate + diphosphate = orotate + 5-phospho-alpha-D-ribose 1-diphosphate. It participates in pyrimidine metabolism; UMP biosynthesis via de novo pathway; UMP from orotate: step 1/2. Catalyzes the transfer of a ribosyl phosphate group from 5-phosphoribose 1-diphosphate to orotate, leading to the formation of orotidine monophosphate (OMP). This is Orotate phosphoribosyltransferase from Pseudomonas fluorescens (strain ATCC BAA-477 / NRRL B-23932 / Pf-5).